The chain runs to 436 residues: GTPase Der (436 aa).

2 consecutive EngA-type G domains span residues 4 to 167 (PVIA…PKIE) and 176 to 351 (IRFS…ESHS). Residues 10–17 (GRPNVGKS), 57–61 (DTGGI), 119–122 (NKVD), 182–189 (GRPNVGKS), 229–233 (DTAGM), and 294–297 (NKWD) each bind GTP. The KH-like domain maps to 352 to 436 (IRIQTNVLND…PIHIIARARD (85 aa)).

It belongs to the TRAFAC class TrmE-Era-EngA-EngB-Septin-like GTPase superfamily. EngA (Der) GTPase family. As to quaternary structure, associates with the 50S ribosomal subunit.

In terms of biological role, GTPase that plays an essential role in the late steps of ribosome biogenesis. The chain is GTPase Der from Bacillus anthracis (strain A0248).